The primary structure comprises 650 residues: Laccase-like multicopper oxidase 1 (650 aa).

The N-terminal stretch at 1-20 (MLLSKLSILLAKWLSVAVYA) is a signal peptide. Plastocyanin-like domains follow at residues 41–151 (QVPS…IVED), 162–360 (ERIL…LRYN), and 439–595 (KPVL…VVGD). C46 and C254 are disulfide-bonded. N-linked (GlcNAc...) asparagine glycans are attached at residues N55 and N83. Cu cation is bound by residues H87, H89, H133, and H135. Residues H501, H504, H506, H576, C577, H578, and H582 each contribute to the Cu cation site. Residue N620 is glycosylated (N-linked (GlcNAc...) asparagine).

Belongs to the multicopper oxidase family. Monomer. In terms of processing, N-glycosylation Asn-55 and Asn-83 is involved in folding, conformational stability and laccase activity.

It carries out the reaction 2 2',3,4-trihydroxy-trans-chalcone + O2 + 2 H(+) = 2 3',4'-dihydroxyaurone + 2 H2O. Its activity is regulated as follows. Retains almost half of its activity in presence of high salt concentrations up to 100 mM NaCl. Retains also more than 85% of its original activity in the presence of 1 mM EDTA, indicating a satisfactory resistance towards chelators, which is rare among metal-containing enzyme. The activity drops significantly in the presence of NaN(3) or SDS. Appears more active in the presence of methanol compared to ethanol, but acetone or DMSO addition severely affect remaining laccase activity. Functionally, yellow laccase-like multicopper oxidase that is able to oxidize a variety of phenolic compounds including standard laccase substrates such as 2'-azino-bis(3-ethylbenzothiazoline-6-sulphonic acid) (ABTS) and 2,6-dimethoxyphenol (2,6-DMP). The existence of an ortho-hydroxy group is crucial for oxidation since pyrogallol and catechol, which contain ortho-hydroxy groups, are readily oxidized, which is not the case for resorcinol and hydroquinone, that contain meta- and para-hydroxy groups, respectively. The same is also true for the existence of a methoxy group in an ortho-position, since 2,6-DMP, guaiacol and ferulic and caffeic acids are also rather easily oxidized compared with the corresponding unsubstituted compound. Can be used for the bioconversion of 2',3,4-trihy-droxychalcone to 3',4'-dihydroxy-aurone, a bioactive aurone recently shown to possess inhibitory activity against several isoforms of the histone deacetylase complex (HDAC). The protein is Laccase-like multicopper oxidase 1 of Thermothelomyces thermophilus (strain ATCC 42464 / BCRC 31852 / DSM 1799) (Sporotrichum thermophile).